The primary structure comprises 233 residues: Large ribosomal subunit protein uL1 (233 aa).

Belongs to the universal ribosomal protein uL1 family. Part of the 50S ribosomal subunit.

Functionally, binds directly to 23S rRNA. The L1 stalk is quite mobile in the ribosome, and is involved in E site tRNA release. Protein L1 is also a translational repressor protein, it controls the translation of the L11 operon by binding to its mRNA. The polypeptide is Large ribosomal subunit protein uL1 (Geobacillus kaustophilus (strain HTA426)).